The primary structure comprises 91 residues: Dynein 8 kDa light chain, flagellar outer arm (91 aa).

The protein belongs to the dynein light chain family. As to quaternary structure, consists of at least 3 heavy chains (alpha, beta and gamma), 2 intermediate chains and 8 light chains.

Its subcellular location is the cytoplasm. It is found in the cytoskeleton. It localises to the flagellum axoneme. The sequence is that of Dynein 8 kDa light chain, flagellar outer arm from Chlamydomonas reinhardtii (Chlamydomonas smithii).